We begin with the raw amino-acid sequence, 338 residues long: Lipoate-protein ligase A (338 aa).

Residues Pro-29–Val-216 form the BPL/LPL catalytic domain. Residues Arg-71, Gly-76–Phe-79, and Lys-134 contribute to the ATP site. (R)-lipoate is bound at residue Lys-134.

The protein belongs to the LplA family. In terms of assembly, monomer.

The protein localises to the cytoplasm. It catalyses the reaction L-lysyl-[lipoyl-carrier protein] + (R)-lipoate + ATP = N(6)-[(R)-lipoyl]-L-lysyl-[lipoyl-carrier protein] + AMP + diphosphate + H(+). Its pathway is protein modification; protein lipoylation via exogenous pathway; protein N(6)-(lipoyl)lysine from lipoate: step 1/2. The protein operates within protein modification; protein lipoylation via exogenous pathway; protein N(6)-(lipoyl)lysine from lipoate: step 2/2. Its function is as follows. Catalyzes both the ATP-dependent activation of exogenously supplied lipoate to lipoyl-AMP and the transfer of the activated lipoyl onto the lipoyl domains of lipoate-dependent enzymes. The protein is Lipoate-protein ligase A of Escherichia coli O6:K15:H31 (strain 536 / UPEC).